A 59-amino-acid chain; its full sequence is Large ribosomal subunit protein bL32c (59 aa).

Residues 1–20 are disordered; that stretch reads MAVPKKRTSKSKKRIRKSVW.

Belongs to the bacterial ribosomal protein bL32 family.

The protein resides in the plastid. It localises to the chloroplast. This is Large ribosomal subunit protein bL32c from Angiopteris evecta (Mule's foot fern).